The chain runs to 989 residues: Phosphoenolpyruvate carboxylase (989 aa).

Residues His-175 and Lys-630 contribute to the active site.

Belongs to the PEPCase type 1 family. Requires Mg(2+) as cofactor.

The enzyme catalyses oxaloacetate + phosphate = phosphoenolpyruvate + hydrogencarbonate. Its function is as follows. Forms oxaloacetate, a four-carbon dicarboxylic acid source for the tricarboxylic acid cycle. This chain is Phosphoenolpyruvate carboxylase, found in Prochlorococcus marinus (strain MIT 9312).